The sequence spans 119 residues: UPF0102 protein Athe_0977 (119 aa).

It belongs to the UPF0102 family.

The polypeptide is UPF0102 protein Athe_0977 (Caldicellulosiruptor bescii (strain ATCC BAA-1888 / DSM 6725 / KCTC 15123 / Z-1320) (Anaerocellum thermophilum)).